A 271-amino-acid chain; its full sequence is Thiosulfate sulfurtransferase (271 aa).

Rhodanese domains are found at residues 21–129 (SAPE…PLSR) and 159–270 (GAAD…TPVE). Catalysis depends on Cys230, which acts as the Cysteine persulfide intermediate. Substrate is bound at residue Arg235.

It localises to the cytoplasm. It carries out the reaction thiosulfate + hydrogen cyanide = thiocyanate + sulfite + 2 H(+). In Azotobacter vinelandii, this protein is Thiosulfate sulfurtransferase (rhdA).